We begin with the raw amino-acid sequence, 118 residues long: Small ribosomal subunit protein uS13 (118 aa).

The tract at residues 94–118 (GLPLRGQRTKTNARTRKGPRKPIRK) is disordered.

This sequence belongs to the universal ribosomal protein uS13 family. Part of the 30S ribosomal subunit. Forms a loose heterodimer with protein S19. Forms two bridges to the 50S subunit in the 70S ribosome.

Functionally, located at the top of the head of the 30S subunit, it contacts several helices of the 16S rRNA. In the 70S ribosome it contacts the 23S rRNA (bridge B1a) and protein L5 of the 50S subunit (bridge B1b), connecting the 2 subunits; these bridges are implicated in subunit movement. Contacts the tRNAs in the A and P-sites. This chain is Small ribosomal subunit protein uS13, found in Alcanivorax borkumensis (strain ATCC 700651 / DSM 11573 / NCIMB 13689 / SK2).